A 387-amino-acid chain; its full sequence is 3-ketoacyl-CoA thiolase (387 aa).

Cysteine 91 acts as the Acyl-thioester intermediate in catalysis. Residues histidine 343 and cysteine 373 each act as proton acceptor in the active site.

This sequence belongs to the thiolase-like superfamily. Thiolase family. In terms of assembly, heterotetramer of two alpha chains (FadB) and two beta chains (FadA).

The protein localises to the cytoplasm. It catalyses the reaction an acyl-CoA + acetyl-CoA = a 3-oxoacyl-CoA + CoA. It functions in the pathway lipid metabolism; fatty acid beta-oxidation. Catalyzes the final step of fatty acid oxidation in which acetyl-CoA is released and the CoA ester of a fatty acid two carbons shorter is formed. This Klebsiella pneumoniae subsp. pneumoniae (strain ATCC 700721 / MGH 78578) protein is 3-ketoacyl-CoA thiolase.